The primary structure comprises 334 residues: Phosphate acyltransferase (334 aa).

The protein belongs to the PlsX family. Homodimer. Probably interacts with PlsY.

It is found in the cytoplasm. It catalyses the reaction a fatty acyl-[ACP] + phosphate = an acyl phosphate + holo-[ACP]. It participates in lipid metabolism; phospholipid metabolism. In terms of biological role, catalyzes the reversible formation of acyl-phosphate (acyl-PO(4)) from acyl-[acyl-carrier-protein] (acyl-ACP). This enzyme utilizes acyl-ACP as fatty acyl donor, but not acyl-CoA. The polypeptide is Phosphate acyltransferase (Caldicellulosiruptor bescii (strain ATCC BAA-1888 / DSM 6725 / KCTC 15123 / Z-1320) (Anaerocellum thermophilum)).